A 56-amino-acid polypeptide reads, in one-letter code: Large ribosomal subunit protein eL40 (56 aa).

It belongs to the eukaryotic ribosomal protein eL40 family.

In Metallosphaera sedula (strain ATCC 51363 / DSM 5348 / JCM 9185 / NBRC 15509 / TH2), this protein is Large ribosomal subunit protein eL40.